Reading from the N-terminus, the 354-residue chain is NAD-dependent protein deacetylase hst2-2 (354 aa).

Residues 16-279 (QCQNQTTLDS…REVARHLGWD (264 aa)) enclose the Deacetylase sirtuin-type domain. NAD(+)-binding positions include 43–63 (GAGL…TGLY) and 126–129 (QNID). The active-site Proton acceptor is the His146. 4 residues coordinate Zn(2+): Cys154, Cys157, Cys178, and Cys183. NAD(+)-binding positions include 220-222 (GTS), 245-247 (NRE), and Cys265.

It belongs to the sirtuin family. Class I subfamily. Requires Zn(2+) as cofactor.

The protein localises to the nucleus. The catalysed reaction is N(6)-acetyl-L-lysyl-[protein] + NAD(+) + H2O = 2''-O-acetyl-ADP-D-ribose + nicotinamide + L-lysyl-[protein]. Its function is as follows. NAD-dependent histone deacetylase, which could function in telomeric silencing, cell cycle progression and chromosome stability. This chain is NAD-dependent protein deacetylase hst2-2, found in Emericella nidulans (strain FGSC A4 / ATCC 38163 / CBS 112.46 / NRRL 194 / M139) (Aspergillus nidulans).